The following is a 455-amino-acid chain: Asparagine--tRNA ligase (455 aa).

The protein belongs to the class-II aminoacyl-tRNA synthetase family. In terms of assembly, homodimer.

It localises to the cytoplasm. It catalyses the reaction tRNA(Asn) + L-asparagine + ATP = L-asparaginyl-tRNA(Asn) + AMP + diphosphate + H(+). The sequence is that of Asparagine--tRNA ligase from Lawsonia intracellularis (strain PHE/MN1-00).